The sequence spans 903 residues: DNA gyrase subunit A (903 aa).

In terms of domain architecture, Topo IIA-type catalytic spans 36-499 (LPDARDGFKP…AIDDSDDEDL (464 aa)). Catalysis depends on Tyr124, which acts as the O-(5'-phospho-DNA)-tyrosine intermediate. Positions 526–532 (QNRGGKG) match the GyrA-box motif. Over residues 881–895 (VDDDSVVKDDAEKQE) the composition is skewed to basic and acidic residues. A disordered region spans residues 881–903 (VDDDSVVKDDAEKQEIGPTETEE).

The protein belongs to the type II topoisomerase GyrA/ParC subunit family. As to quaternary structure, heterotetramer, composed of two GyrA and two GyrB chains. In the heterotetramer, GyrA contains the active site tyrosine that forms a transient covalent intermediate with DNA, while GyrB binds cofactors and catalyzes ATP hydrolysis.

It localises to the cytoplasm. The enzyme catalyses ATP-dependent breakage, passage and rejoining of double-stranded DNA.. In terms of biological role, a type II topoisomerase that negatively supercoils closed circular double-stranded (ds) DNA in an ATP-dependent manner to modulate DNA topology and maintain chromosomes in an underwound state. Negative supercoiling favors strand separation, and DNA replication, transcription, recombination and repair, all of which involve strand separation. Also able to catalyze the interconversion of other topological isomers of dsDNA rings, including catenanes and knotted rings. Type II topoisomerases break and join 2 DNA strands simultaneously in an ATP-dependent manner. This chain is DNA gyrase subunit A, found in Fibrobacter succinogenes (strain ATCC 19169 / S85).